A 389-amino-acid polypeptide reads, in one-letter code: Putative sugar efflux transporter DR_1322 (389 aa).

The next 12 helical transmembrane spans lie at 10–30, 34–54, 69–89, 96–116, 135–155, 161–181, 211–231, 246–266, 281–301, 308–328, 341–361, and 363–383; these read AVLLLGLATSLAGPFMSLFAV, GMTPLQLGLFLTFNALSAVLV, KPLVLLTLAAGVLAYLALSGV, MATGVLLLAVSSAAFPQVFAF, VLRAVFSFAWVVGPGVGAAVL, SGVFLLAALCYALAGLPLLFI, GWVVAAFTLYGMAMHMGMVMF, VGFLVGLCALLEIPVMLLFVL, LLLFVVHFALIYLAQGMPLLI, AAVLAVMAGLGMTYFQQLMPG, SVVGSMLSGIVAGAWAQVFGY, and PVFLLCAALSLAAWGMMLWAT.

This sequence belongs to the major facilitator superfamily. Set transporter family.

Its subcellular location is the cell membrane. In terms of biological role, involved in the efflux of sugars. The physiological role may be the detoxification of non-metabolizable sugar analogs. In Deinococcus radiodurans (strain ATCC 13939 / DSM 20539 / JCM 16871 / CCUG 27074 / LMG 4051 / NBRC 15346 / NCIMB 9279 / VKM B-1422 / R1), this protein is Putative sugar efflux transporter DR_1322.